The chain runs to 335 residues: Tetraacyldisaccharide 4'-kinase (335 aa).

58 to 65 (TVGGSGKT) contributes to the ATP binding site.

Belongs to the LpxK family.

The catalysed reaction is a lipid A disaccharide + ATP = a lipid IVA + ADP + H(+). It participates in glycolipid biosynthesis; lipid IV(A) biosynthesis; lipid IV(A) from (3R)-3-hydroxytetradecanoyl-[acyl-carrier-protein] and UDP-N-acetyl-alpha-D-glucosamine: step 6/6. Transfers the gamma-phosphate of ATP to the 4'-position of a tetraacyldisaccharide 1-phosphate intermediate (termed DS-1-P) to form tetraacyldisaccharide 1,4'-bis-phosphate (lipid IVA). This chain is Tetraacyldisaccharide 4'-kinase, found in Shewanella sp. (strain MR-4).